The primary structure comprises 529 residues: Tyrosinase (529 aa).

The first 18 residues, 1-18, serve as a signal peptide directing secretion; sequence MLLAALCCLLWSFRTSAG. Over 19-472 the chain is Lumenal; sequence HFPRACASSK…IKPFLEQASR (454 aa). Asn86, Asn111, and Asn161 each carry an N-linked (GlcNAc...) asparagine glycan. His180, His202, and His211 together coordinate Cu cation. N-linked (GlcNAc...) asparagine glycosylation is found at Asn230 and Asn336. His362 and His366 together coordinate Cu cation. Residue Asn370 is glycosylated (N-linked (GlcNAc...) asparagine). Residue His389 coordinates Cu cation. The chain crosses the membrane as a helical span at residues 473-495; the sequence is IWPWLIGAAVVGSVLTAVLGRLT. Residues 496–529 lie on the Cytoplasmic side of the membrane; sequence SLLCRRKRKQLREERQPLLMEKEDYHSLLYQTHV.

This sequence belongs to the tyrosinase family. In terms of assembly, forms an OPN3-dependent complex with DCT in response to blue light in melanocytes. It depends on Cu(2+) as a cofactor. Glycosylated.

It localises to the melanosome membrane. It is found in the melanosome. The enzyme catalyses 2 L-dopa + O2 = 2 L-dopaquinone + 2 H2O. It catalyses the reaction L-tyrosine + O2 = L-dopaquinone + H2O. The catalysed reaction is 2 5,6-dihydroxyindole-2-carboxylate + O2 = 2 indole-5,6-quinone-2-carboxylate + 2 H2O. This is a copper-containing oxidase that functions in the formation of pigments such as melanins and other polyphenolic compounds. Catalyzes the initial and rate limiting step in the cascade of reactions leading to melanin production from tyrosine. In addition to hydroxylating tyrosine to DOPA (3,4-dihydroxyphenylalanine), also catalyzes the oxidation of DOPA to DOPA-quinone, and possibly the oxidation of DHI (5,6-dihydroxyindole) to indole-5,6 quinone. The chain is Tyrosinase (TYR) from Felis catus (Cat).